A 380-amino-acid chain; its full sequence is Glutamate 5-kinase (380 aa).

Lysine 15 serves as a coordination point for ATP. 3 residues coordinate substrate: serine 59, aspartate 146, and asparagine 158. 178–179 (TD) serves as a coordination point for ATP. One can recognise a PUA domain in the interval 285–363 (RGSVTVDAGA…AEFERLLGYA (79 aa)).

Belongs to the glutamate 5-kinase family.

It is found in the cytoplasm. The enzyme catalyses L-glutamate + ATP = L-glutamyl 5-phosphate + ADP. It participates in amino-acid biosynthesis; L-proline biosynthesis; L-glutamate 5-semialdehyde from L-glutamate: step 1/2. Catalyzes the transfer of a phosphate group to glutamate to form L-glutamate 5-phosphate. The protein is Glutamate 5-kinase of Acidovorax ebreus (strain TPSY) (Diaphorobacter sp. (strain TPSY)).